Consider the following 252-residue polypeptide: Thiazole synthase (252 aa).

The Schiff-base intermediate with DXP role is filled by Lys91. 1-deoxy-D-xylulose 5-phosphate is bound by residues Gly152, 179–180 (AG), and 201–202 (NT).

This sequence belongs to the ThiG family. Homotetramer. Forms heterodimers with either ThiH or ThiS.

It localises to the cytoplasm. The catalysed reaction is [ThiS sulfur-carrier protein]-C-terminal-Gly-aminoethanethioate + 2-iminoacetate + 1-deoxy-D-xylulose 5-phosphate = [ThiS sulfur-carrier protein]-C-terminal Gly-Gly + 2-[(2R,5Z)-2-carboxy-4-methylthiazol-5(2H)-ylidene]ethyl phosphate + 2 H2O + H(+). The protein operates within cofactor biosynthesis; thiamine diphosphate biosynthesis. In terms of biological role, catalyzes the rearrangement of 1-deoxy-D-xylulose 5-phosphate (DXP) to produce the thiazole phosphate moiety of thiamine. Sulfur is provided by the thiocarboxylate moiety of the carrier protein ThiS. In vitro, sulfur can be provided by H(2)S. In Erwinia amylovora (Fire blight bacteria), this protein is Thiazole synthase.